Reading from the N-terminus, the 356-residue chain is (+)-(1(10)E,4E,6S,7R)-germacradien-6-ol synthase (356 aa).

The Mg(2+) site is built by Asp-86 and Asp-91. The short motif at 86 to 91 (DDEYCD) is the DDXXXD motif element. Position 181 (Arg-181) interacts with substrate. Mg(2+) contacts are provided by Asn-227 and Ser-231. Residue Lys-234 participates in substrate binding. Mg(2+) is bound at residue Glu-235. 314–315 (RY) contacts substrate.

The protein belongs to the terpene synthase family. The cofactor is Mg(2+).

The enzyme catalyses (2E,6E)-farnesyl diphosphate + H2O = (+)-(1(10)E,4E,6S,7R)-germacradien-6-ol + diphosphate. The protein operates within secondary metabolite biosynthesis; terpenoid biosynthesis. Functionally, catalyzes the conversion of (2E,6E)-farnesyl diphosphate (FPP) to yield the sesquiterpene (+)-(1(10)E,4E,6S,7R)-germacradien-6-ol via a putative 1,10-cyclization, which could require the abstraction of the pyrophosphate from FPP to yield the (E,E)-germacradienyl cation. The only accepted substrate is farnesyl diphosphate (FPP). In Streptomyces pratensis (strain ATCC 33331 / IAF-45CD), this protein is (+)-(1(10)E,4E,6S,7R)-germacradien-6-ol synthase.